Consider the following 392-residue polypeptide: Formate-dependent phosphoribosylglycinamide formyltransferase (392 aa).

Residues 12 to 13 and glutamate 72 contribute to the N(1)-(5-phospho-beta-D-ribosyl)glycinamide site; that span reads EL. ATP contacts are provided by residues arginine 104, lysine 145, 150 to 155, 185 to 188, and glutamate 193; these read SSGKGQ and EAFV. The ATP-grasp domain occupies 109–300; it reads DLAARDLGLR…EFELHARAVL (192 aa). Mg(2+)-binding residues include glutamate 258 and glutamate 270. Residues aspartate 277, lysine 348, and 355 to 356 each bind N(1)-(5-phospho-beta-D-ribosyl)glycinamide; that span reads RR.

Belongs to the PurK/PurT family. As to quaternary structure, homodimer.

The enzyme catalyses N(1)-(5-phospho-beta-D-ribosyl)glycinamide + formate + ATP = N(2)-formyl-N(1)-(5-phospho-beta-D-ribosyl)glycinamide + ADP + phosphate + H(+). It participates in purine metabolism; IMP biosynthesis via de novo pathway; N(2)-formyl-N(1)-(5-phospho-D-ribosyl)glycinamide from N(1)-(5-phospho-D-ribosyl)glycinamide (formate route): step 1/1. In terms of biological role, involved in the de novo purine biosynthesis. Catalyzes the transfer of formate to 5-phospho-ribosyl-glycinamide (GAR), producing 5-phospho-ribosyl-N-formylglycinamide (FGAR). Formate is provided by PurU via hydrolysis of 10-formyl-tetrahydrofolate. The protein is Formate-dependent phosphoribosylglycinamide formyltransferase of Chlorobaculum tepidum (strain ATCC 49652 / DSM 12025 / NBRC 103806 / TLS) (Chlorobium tepidum).